A 426-amino-acid polypeptide reads, in one-letter code: Histidine--tRNA ligase 1 (426 aa).

Belongs to the class-II aminoacyl-tRNA synthetase family. Homodimer.

The protein localises to the cytoplasm. The enzyme catalyses tRNA(His) + L-histidine + ATP = L-histidyl-tRNA(His) + AMP + diphosphate + H(+). The chain is Histidine--tRNA ligase 1 from Bacillus cereus (strain ATCC 14579 / DSM 31 / CCUG 7414 / JCM 2152 / NBRC 15305 / NCIMB 9373 / NCTC 2599 / NRRL B-3711).